Here is a 116-residue protein sequence, read N- to C-terminus: Large ribosomal subunit protein bL17 (116 aa).

Belongs to the bacterial ribosomal protein bL17 family. In terms of assembly, part of the 50S ribosomal subunit. Contacts protein L32.

This is Large ribosomal subunit protein bL17 from Aliarcobacter butzleri (strain RM4018) (Arcobacter butzleri).